We begin with the raw amino-acid sequence, 130 residues long: Small ribosomal subunit protein uS9 (130 aa).

It belongs to the universal ribosomal protein uS9 family.

This is Small ribosomal subunit protein uS9 from Clostridium perfringens (strain ATCC 13124 / DSM 756 / JCM 1290 / NCIMB 6125 / NCTC 8237 / Type A).